The following is a 400-amino-acid chain: Aspartate/prephenate aminotransferase (400 aa).

L-aspartate-binding residues include glycine 39, tryptophan 125, and asparagine 175. At lysine 239 the chain carries N6-(pyridoxal phosphate)lysine. Arginine 375 is an L-aspartate binding site.

The protein belongs to the class-I pyridoxal-phosphate-dependent aminotransferase family. In terms of assembly, homodimer. Pyridoxal 5'-phosphate serves as cofactor.

It localises to the cytoplasm. The enzyme catalyses L-aspartate + 2-oxoglutarate = oxaloacetate + L-glutamate. It carries out the reaction L-arogenate + 2-oxoglutarate = prephenate + L-glutamate. Catalyzes the reversible conversion of aspartate and 2-oxoglutarate to glutamate and oxaloacetate. Can also transaminate prephenate in the presence of glutamate. The polypeptide is Aspartate/prephenate aminotransferase (Cereibacter sphaeroides (strain ATCC 17029 / ATH 2.4.9) (Rhodobacter sphaeroides)).